The primary structure comprises 300 residues: Acetylglutamate kinase (300 aa).

Substrate is bound by residues 68-69 (GG), arginine 90, and asparagine 195.

Belongs to the acetylglutamate kinase family. ArgB subfamily.

It is found in the cytoplasm. The catalysed reaction is N-acetyl-L-glutamate + ATP = N-acetyl-L-glutamyl 5-phosphate + ADP. Its pathway is amino-acid biosynthesis; L-arginine biosynthesis; N(2)-acetyl-L-ornithine from L-glutamate: step 2/4. Catalyzes the ATP-dependent phosphorylation of N-acetyl-L-glutamate. This is Acetylglutamate kinase from Stutzerimonas stutzeri (strain A1501) (Pseudomonas stutzeri).